A 137-amino-acid chain; its full sequence is Large-conductance mechanosensitive channel (137 aa).

Helical transmembrane passes span 10–30 (FAMRGNVVDLAVGVIIGAAFG) and 76–96 (GVFIQNVFDFVIVAFAIFVAI).

It belongs to the MscL family. In terms of assembly, homopentamer.

It is found in the cell inner membrane. Its function is as follows. Channel that opens in response to stretch forces in the membrane lipid bilayer. May participate in the regulation of osmotic pressure changes within the cell. This Salmonella typhimurium (strain LT2 / SGSC1412 / ATCC 700720) protein is Large-conductance mechanosensitive channel.